A 255-amino-acid polypeptide reads, in one-letter code: MPRYKAVIAYDGAEFFGFQLQTKNGVESVRTVQGELNKVINKMAKNPSPQIKVVGASRTDTGVHAFGQVVHFDLPFNIDPEGVRKGMNTLLPFDVVVNHVEHVSDDFHARFNTHSKRYIYRVSTTDYKDPFKRKYTGHFHWKLDINRIKAALPDLLGEHDFASFAASGNETATTIRLITRADVDEKPEEHEIVFTFEGNAFLYNQIRIMVGVLLEIGTGKRPVHDIVRLIEVKDREQARYTAPASGLYLDEIDYN.

D60 functions as the Nucleophile in the catalytic mechanism. Y118 contacts substrate.

Belongs to the tRNA pseudouridine synthase TruA family. In terms of assembly, homodimer.

It carries out the reaction uridine(38/39/40) in tRNA = pseudouridine(38/39/40) in tRNA. Its function is as follows. Formation of pseudouridine at positions 38, 39 and 40 in the anticodon stem and loop of transfer RNAs. The protein is tRNA pseudouridine synthase A of Leuconostoc mesenteroides subsp. mesenteroides (strain ATCC 8293 / DSM 20343 / BCRC 11652 / CCM 1803 / JCM 6124 / NCDO 523 / NBRC 100496 / NCIMB 8023 / NCTC 12954 / NRRL B-1118 / 37Y).